The primary structure comprises 341 residues: 33 kDa chaperonin (341 aa).

Cystine bridges form between Cys-245-Cys-247 and Cys-278-Cys-281.

Belongs to the HSP33 family. In terms of processing, under oxidizing conditions two disulfide bonds are formed involving the reactive cysteines. Under reducing conditions zinc is bound to the reactive cysteines and the protein is inactive.

The protein resides in the cytoplasm. In terms of biological role, redox regulated molecular chaperone. Protects both thermally unfolding and oxidatively damaged proteins from irreversible aggregation. Plays an important role in the bacterial defense system toward oxidative stress. The chain is 33 kDa chaperonin from Thermus thermophilus (strain ATCC BAA-163 / DSM 7039 / HB27).